The primary structure comprises 257 residues: E3 ubiquitin-protein ligase RNF170 (257 aa).

Topologically, residues 1–24 (MADNQEERPHFPLDEGSIIEGVSD) are lumenal. A helical membrane pass occupies residues 25-45 (QVIVVVLLSFVAVGSLIYLLL). Topologically, residues 46–200 (RNDEQNIHPE…GGLFWMFRIR (155 aa)) are cytoplasmic. Residues 87–130 (CPVCLQQATFPVETNCGHLFCGSCIIAYWRYGTWLGAINCPICR) form an RING-type zinc finger. A helical membrane pass occupies residues 201–221 (IVLCLLGALLYLVSPLDIIPE). Ala222 is a topological domain (lumenal). The chain crosses the membrane as a helical span at residues 223-243 (LFGILGFLDDLFVLFLLLIYI). Residues 244-257 (SIMYREVVTQRLYR) are Cytoplasmic-facing.

The protein localises to the endoplasmic reticulum membrane. It catalyses the reaction S-ubiquitinyl-[E2 ubiquitin-conjugating enzyme]-L-cysteine + [acceptor protein]-L-lysine = [E2 ubiquitin-conjugating enzyme]-L-cysteine + N(6)-ubiquitinyl-[acceptor protein]-L-lysine.. The protein operates within protein modification; protein ubiquitination. E3 ubiquitin-protein ligase that plays an essential role in stimulus-induced inositol 1,4,5-trisphosphate receptor (ITPR) ubiquitination and degradation via the endoplasmic reticulum-associated degradation (ERAD) pathway. Also involved in ITPR turnover in resting cells. This Xenopus laevis (African clawed frog) protein is E3 ubiquitin-protein ligase RNF170 (rnf170).